The sequence spans 1374 residues: Y' element ATP-dependent helicase YLL067C (1374 aa).

The interval 321–345 is disordered; it reads AGEAASSDHDQKISRVTRKRPREPK. A Helicase ATP-binding domain is found at 375-552; sequence EIYMADTPSV…LQRIGLTGLA (178 aa). Residue 388–395 coordinates ATP; the sequence is APPGYGKT. The DEAH box motif lies at 498 to 501; the sequence is DEFH. Residues 609–758 form the Helicase C-terminal domain; that stretch reads KLLLALFEIE…EFYGLESKKG (150 aa). Positions 832–1011 are enriched in low complexity; that stretch reads ANASTNATTN…ATTTESTNAS (180 aa). Residues 832-1035 are disordered; sequence ANASTNATTN…RFHPVTDINK (204 aa). Basic and acidic residues predominate over residues 1012–1035; it reads AKEDANKDGNAEDNRFHPVTDINK.

The protein belongs to the helicase family. Yeast subtelomeric Y' repeat subfamily.

Catalyzes DNA unwinding and is involved in telomerase-independent telomere maintenance. The polypeptide is Y' element ATP-dependent helicase YLL067C (Saccharomyces cerevisiae (strain ATCC 204508 / S288c) (Baker's yeast)).